Consider the following 229-residue polypeptide: Ribonuclease 3 (229 aa).

An RNase III domain is found at 5-134; sequence EQKLEQDFGI…FLGALYLDQG (130 aa). Residue E47 participates in Mg(2+) binding. D51 is an active-site residue. Mg(2+) is bound by residues D120 and E123. Residue E123 is part of the active site. The DRBM domain occupies 160–229; the sequence is DYKTALQERL…AKSALEQLGN (70 aa).

The protein belongs to the ribonuclease III family. In terms of assembly, homodimer. Requires Mg(2+) as cofactor.

The protein resides in the cytoplasm. The enzyme catalyses Endonucleolytic cleavage to 5'-phosphomonoester.. In terms of biological role, digests double-stranded RNA. Involved in the processing of primary rRNA transcript to yield the immediate precursors to the large and small rRNAs (23S and 16S). Also processes some mRNAs, and tRNAs when they are encoded in the rRNA operon. Its function is as follows. CRISPR (clustered regularly interspaced short palindromic repeat) is an adaptive immune system that provides protection against mobile genetic elements (viruses, transposable elements and conjugative plasmids). CRISPR clusters contain spacers, sequences complementary to antecedent mobile elements, and target invading nucleic acids. CRISPR clusters are transcribed and processed into CRISPR RNA (crRNA). In this organism endogenous ribonuclease 3 and Cas9 are required for correct coprocessing of pre-crRNA and the trans-encoded small RNA (tracrRNA). Cas9, crRNA and tracrRNA are required for cleavage of invading DNA. Complements pre-crRNA and tracRNA coprocessing defects in an rnc deletion in S.pyogenes strain 370. This chain is Ribonuclease 3, found in Streptococcus thermophilus (strain ATCC BAA-491 / LMD-9).